Here is a 298-residue protein sequence, read N- to C-terminus: Beta-soluble NSF attachment protein (298 aa).

Belongs to the SNAP family. In terms of assembly, interacts with PRKCABP, and disrupts the interaction between GRIA2 and PRKCABP, leading to the internalization of GRIA2. In terms of tissue distribution, brain.

Its subcellular location is the membrane. Functionally, required for vesicular transport between the endoplasmic reticulum and the Golgi apparatus. The chain is Beta-soluble NSF attachment protein (NAPB) from Bos taurus (Bovine).